Consider the following 147-residue polypeptide: Large ribosomal subunit protein uL15 (147 aa).

Positions 1-14 (MKLHELRPAEGAVR) are enriched in basic and acidic residues. Residues 1–54 (MKLHELRPAEGAVRDRKRKGRGTASGLGKTAGRGSNGQKARSGGGVRPGFEGGQ) are disordered. Gly residues-rich tracts occupy residues 23-35 (TASGLGKTAGRGS) and 42-52 (SGGGVRPGFEG).

It belongs to the universal ribosomal protein uL15 family. In terms of assembly, part of the 50S ribosomal subunit.

Binds to the 23S rRNA. The chain is Large ribosomal subunit protein uL15 from Alkaliphilus oremlandii (strain OhILAs) (Clostridium oremlandii (strain OhILAs)).